The sequence spans 154 residues: Ecotin-like protein 2 (154 aa).

Belongs to the protease inhibitor I11 (ecotin) family.

The protein is Ecotin-like protein 2 of Leishmania braziliensis.